We begin with the raw amino-acid sequence, 168 residues long: Endoribonuclease YbeY (168 aa).

Histidine 126, histidine 130, and histidine 136 together coordinate Zn(2+).

The protein belongs to the endoribonuclease YbeY family. Zn(2+) serves as cofactor.

The protein resides in the cytoplasm. Its function is as follows. Single strand-specific metallo-endoribonuclease involved in late-stage 70S ribosome quality control and in maturation of the 3' terminus of the 16S rRNA. This is Endoribonuclease YbeY from Rhizobium meliloti (strain 1021) (Ensifer meliloti).